The primary structure comprises 698 residues: Transcription factor cwo (698 aa).

Residues 62–75 (QDPLSHRIIEKRRR) are basic motif; degenerate. The 56-residue stretch at 62-117 (QDPLSHRIIEKRRRDRMNSCLADLSRLIPPQYQRKGRGRIEKTEIIEMAIRHLKHL) folds into the bHLH domain. Residues 76–117 (DRMNSCLADLSRLIPPQYQRKGRGRIEKTEIIEMAIRHLKHL) are helix-loop-helix motif. An Orange domain is found at 128 to 159 (YRSGYMDCMKEAAKFLYDVHMQDFCHRLLGRL). Disordered regions lie at residues 257–319 (SSPA…ASST) and 349–369 (STAP…FESS). A compositionally biased stretch (low complexity) spans 280–318 (APPAADNVPSNSTGSGSAAACAGGNSNSSGSNSSNAASS). Basic and acidic residues predominate over residues 359–369 (TDSSHHDFESS).

In terms of tissue distribution, expressed in adult brain where it is detected in the dorsal lateral neurons, small and large ventral lateral neurons and dorsal neurons 1, 2 and 3 (at protein level). Expressed at constant levels in a 12 hour light / 12 hour day cycle (at protein level). Strongly expressed in pacemaker neurons. In adults, mRNA expression oscillates in a circadian manner with a peak at around 14 hour Zeitgeber time. mRNA levels oscillate in a rhythmic manner in both 12 hour light / 12 hour dark and constant dark conditions with a morning peak around the time of lights-on and an evening peak around the time of lights-off in light/dark conditions. During stage 8 of embryonic development, expressed in the anterior and posterior midgut primordia and expression in the gut continues throughout embryonic development. During germ band retraction, expression is initiated in many tissues in a prominent segmentally repeated pattern. Later, expression is ubiquitous but has higher levels in segmentally repeated clusters of cells. Expression is also found in cells of the amnioserosa, in the head region, in posterior spiracles and in tracheal trees.

The protein localises to the nucleus. Plays a role in the regulation of circadian rhythms. Transcriptional repressor which inhibits Clock-mediated transcriptional activation by binding to E boxes in the promoters of Clock target genes and repressing their transcription. E box binding activity is time-dependent with higher binding activity seen in the early morning (zeitgeber time 2) than early evening (zeitgeber time 14) and is dependent on the presence of the circadian protein per. It is likely that per binds to Clock-cycle heterodimers, reducing their affinity for E box binding and allowing cwo to bind instead. Negatively regulates its own expression. The protein is Transcription factor cwo of Drosophila melanogaster (Fruit fly).